Reading from the N-terminus, the 178-residue chain is Large ribosomal subunit protein uL6 (178 aa).

Basic and acidic residues predominate over residues 155–169 (PYKGKGIKYDNEQIR). Positions 155-178 (PYKGKGIKYDNEQIRRKAGKSGGK) are disordered.

The protein belongs to the universal ribosomal protein uL6 family. As to quaternary structure, part of the 50S ribosomal subunit.

This protein binds to the 23S rRNA, and is important in its secondary structure. It is located near the subunit interface in the base of the L7/L12 stalk, and near the tRNA binding site of the peptidyltransferase center. The polypeptide is Large ribosomal subunit protein uL6 (Nitratidesulfovibrio vulgaris (strain DSM 19637 / Miyazaki F) (Desulfovibrio vulgaris)).